A 257-amino-acid chain; its full sequence is 4-hydroxy-tetrahydrodipicolinate reductase (257 aa).

Residues 11–16 (GANGRM) and Glu-37 each bind NAD(+). Arg-38 is an NADP(+) binding site. Residues 86 to 88 (GST) and 110 to 113 (SGNY) contribute to the NAD(+) site. The active-site Proton donor/acceptor is the His-144. (S)-2,3,4,5-tetrahydrodipicolinate is bound at residue His-145. The Proton donor role is filled by Lys-148. 154-155 (GT) serves as a coordination point for (S)-2,3,4,5-tetrahydrodipicolinate.

This sequence belongs to the DapB family.

It localises to the cytoplasm. The enzyme catalyses (S)-2,3,4,5-tetrahydrodipicolinate + NAD(+) + H2O = (2S,4S)-4-hydroxy-2,3,4,5-tetrahydrodipicolinate + NADH + H(+). It carries out the reaction (S)-2,3,4,5-tetrahydrodipicolinate + NADP(+) + H2O = (2S,4S)-4-hydroxy-2,3,4,5-tetrahydrodipicolinate + NADPH + H(+). It participates in amino-acid biosynthesis; L-lysine biosynthesis via DAP pathway; (S)-tetrahydrodipicolinate from L-aspartate: step 4/4. Catalyzes the conversion of 4-hydroxy-tetrahydrodipicolinate (HTPA) to tetrahydrodipicolinate. The polypeptide is 4-hydroxy-tetrahydrodipicolinate reductase (Caulobacter vibrioides (strain ATCC 19089 / CIP 103742 / CB 15) (Caulobacter crescentus)).